The chain runs to 460 residues: Cytochrome P450 CYP71D312 (460 aa).

Cys-398 contacts heme.

Belongs to the cytochrome P450 family. Requires heme as cofactor.

Functionally, probable heme-thiolate monooxygenase. This Panax ginseng (Korean ginseng) protein is Cytochrome P450 CYP71D312.